The chain runs to 392 residues: Probable protein phosphatase 2C 29 (392 aa).

In terms of domain architecture, PPM-type phosphatase spans D44–L353. The Mn(2+) site is built by D75, G76, D285, and D344. The interval A360–R392 is disordered.

Belongs to the PP2C family. It depends on Mg(2+) as a cofactor. Requires Mn(2+) as cofactor.

The enzyme catalyses O-phospho-L-seryl-[protein] + H2O = L-seryl-[protein] + phosphate. The catalysed reaction is O-phospho-L-threonyl-[protein] + H2O = L-threonyl-[protein] + phosphate. The protein is Probable protein phosphatase 2C 29 of Oryza sativa subsp. japonica (Rice).